The sequence spans 184 residues: Photosystem I assembly protein Ycf4 (184 aa).

The next 2 helical transmembrane spans lie at 22–42 and 57–77; these read FCWACILFLGSLGFLVVGTSS and ILFFPQGIVMSFYGIAGLFIS.

Belongs to the Ycf4 family.

It is found in the plastid. It localises to the chloroplast thylakoid membrane. Its function is as follows. Seems to be required for the assembly of the photosystem I complex. This Phalaenopsis aphrodite subsp. formosana (Moth orchid) protein is Photosystem I assembly protein Ycf4.